The sequence spans 186 residues: Probable RNA 2'-phosphotransferase (186 aa).

Belongs to the KptA/TPT1 family.

Functionally, removes the 2'-phosphate from RNA via an intermediate in which the phosphate is ADP-ribosylated by NAD followed by a presumed transesterification to release the RNA and generate ADP-ribose 1''-2''-cyclic phosphate (APPR&gt;P). May function as an ADP-ribosylase. The sequence is that of Probable RNA 2'-phosphotransferase from Clostridium perfringens (strain SM101 / Type A).